The primary structure comprises 281 residues: Nucleotide-binding protein Tpet_1006 (281 aa).

9–16 provides a ligand contact to ATP; it reads GLSGAGKT. 58–61 lines the GTP pocket; that stretch reads DVRS.

The protein belongs to the RapZ-like family.

Functionally, displays ATPase and GTPase activities. The protein is Nucleotide-binding protein Tpet_1006 of Thermotoga petrophila (strain ATCC BAA-488 / DSM 13995 / JCM 10881 / RKU-1).